The following is a 276-amino-acid chain: Secreted RxLR effector protein 150 (276 aa).

An N-terminal signal peptide occupies residues 1-18 (MRNIAFLIGLFFIGYSSC). The short motif at 49-64 (RTLQADDRERILAEER) is the RxLR-dEER element.

This sequence belongs to the RxLR effector family.

Its subcellular location is the secreted. It localises to the host nucleus. The protein localises to the host cytoplasm. Secreted effector that partially suppresses the host cell death induced by cell death-inducing proteins. The polypeptide is Secreted RxLR effector protein 150 (Plasmopara viticola (Downy mildew of grapevine)).